The primary structure comprises 318 residues: Receptor homology region, transmembrane domain- and RING domain-containing protein 6 (318 aa).

The N-terminal stretch at 1-20 (MNGSWITILSLLVISQLASS) is a signal peptide. Residues 22 to 162 (VTLIGKNTFL…LIPGFGISSW (141 aa)) are Lumenal-facing. C62 and C87 are oxidised to a cystine. The PA domain maps to 70-143 (EKGSKFRPSY…RTSGEVLKEY (74 aa)). N-linked (GlcNAc...) asparagine glycosylation is present at N121. The chain crosses the membrane as a helical span at residues 163-183 (SIMAITFVSLLVISAVLASYF). Over 184-318 (SVRRHRIRQH…DLPIVVRVYL (135 aa)) the chain is Cytoplasmic. An RING-type; atypical zinc finger spans residues 233 to 275 (CAICIDDYRVGEILRILPCKHKYHAVCIDSWLGRCRSFCPVCK).

The protein resides in the prevacuolar compartment membrane. The protein localises to the protein storage vacuole membrane. In terms of biological role, involved in the trafficking of vacuolar proteins. May function as a sorting receptor for protein trafficking to the protein storage vacuole (PSV). The protein is Receptor homology region, transmembrane domain- and RING domain-containing protein 6 (RMR6) of Arabidopsis thaliana (Mouse-ear cress).